We begin with the raw amino-acid sequence, 463 residues long: UDP-N-acetylmuramoylalanine--D-glutamate ligase (463 aa).

109 to 115 (GTDGKST) provides a ligand contact to ATP.

This sequence belongs to the MurCDEF family.

It localises to the cytoplasm. It catalyses the reaction UDP-N-acetyl-alpha-D-muramoyl-L-alanine + D-glutamate + ATP = UDP-N-acetyl-alpha-D-muramoyl-L-alanyl-D-glutamate + ADP + phosphate + H(+). It participates in cell wall biogenesis; peptidoglycan biosynthesis. Its function is as follows. Cell wall formation. Catalyzes the addition of glutamate to the nucleotide precursor UDP-N-acetylmuramoyl-L-alanine (UMA). The sequence is that of UDP-N-acetylmuramoylalanine--D-glutamate ligase from Leptospira interrogans serogroup Icterohaemorrhagiae serovar copenhageni (strain Fiocruz L1-130).